The sequence spans 104 residues: Zinc-containing ferredoxin-2 (104 aa).

Positions 2–37 are N-terminal extension; sequence GIDPNYRQNRQVVGEHEGHKIYGPVEPPGKLGIHGT. Positions 17, 20, and 35 each coordinate Zn(2+). 4Fe-4S ferredoxin-type domains lie at 38-66 and 75-104; these read IVGVDFDVCIADGSCINACPVNVFQWFDT and KADPINEKACIFCMACVNVCPVAAIDVKPP. C46 and C52 together coordinate [3Fe-4S] cluster. Residue C56 participates in [4Fe-4S] cluster binding. D77 contacts Zn(2+). [4Fe-4S] cluster is bound by residues C84, C87, and C90. A [3Fe-4S] cluster-binding site is contributed by C94.

[3Fe-4S] cluster is required as a cofactor. The cofactor is [4Fe-4S] cluster. It depends on Zn(2+) as a cofactor.

Its function is as follows. Ferredoxins are iron-sulfur proteins that transfer electrons in a wide variety of metabolic reactions. This is Zinc-containing ferredoxin-2 (zfx2) from Sulfurisphaera tokodaii (strain DSM 16993 / JCM 10545 / NBRC 100140 / 7) (Sulfolobus tokodaii).